The sequence spans 615 residues: Dihydroxy-acid dehydratase (615 aa).

Asp-85 is a binding site for Mg(2+). Cys-126 provides a ligand contact to [2Fe-2S] cluster. Mg(2+) is bound by residues Asp-127 and Lys-128. Lys-128 carries the N6-carboxylysine modification. Cys-199 contacts [2Fe-2S] cluster. Mg(2+) is bound at residue Glu-495. The Proton acceptor role is filled by Ser-521.

It belongs to the IlvD/Edd family. In terms of assembly, homodimer. The cofactor is [2Fe-2S] cluster. It depends on Mg(2+) as a cofactor.

The enzyme catalyses (2R)-2,3-dihydroxy-3-methylbutanoate = 3-methyl-2-oxobutanoate + H2O. It carries out the reaction (2R,3R)-2,3-dihydroxy-3-methylpentanoate = (S)-3-methyl-2-oxopentanoate + H2O. It participates in amino-acid biosynthesis; L-isoleucine biosynthesis; L-isoleucine from 2-oxobutanoate: step 3/4. The protein operates within amino-acid biosynthesis; L-valine biosynthesis; L-valine from pyruvate: step 3/4. Functionally, functions in the biosynthesis of branched-chain amino acids. Catalyzes the dehydration of (2R,3R)-2,3-dihydroxy-3-methylpentanoate (2,3-dihydroxy-3-methylvalerate) into 2-oxo-3-methylpentanoate (2-oxo-3-methylvalerate) and of (2R)-2,3-dihydroxy-3-methylbutanoate (2,3-dihydroxyisovalerate) into 2-oxo-3-methylbutanoate (2-oxoisovalerate), the penultimate precursor to L-isoleucine and L-valine, respectively. This Mannheimia succiniciproducens (strain KCTC 0769BP / MBEL55E) protein is Dihydroxy-acid dehydratase.